A 153-amino-acid polypeptide reads, in one-letter code: SsrA-binding protein (153 aa).

It belongs to the SmpB family.

The protein resides in the cytoplasm. Required for rescue of stalled ribosomes mediated by trans-translation. Binds to transfer-messenger RNA (tmRNA), required for stable association of tmRNA with ribosomes. tmRNA and SmpB together mimic tRNA shape, replacing the anticodon stem-loop with SmpB. tmRNA is encoded by the ssrA gene; the 2 termini fold to resemble tRNA(Ala) and it encodes a 'tag peptide', a short internal open reading frame. During trans-translation Ala-aminoacylated tmRNA acts like a tRNA, entering the A-site of stalled ribosomes, displacing the stalled mRNA. The ribosome then switches to translate the ORF on the tmRNA; the nascent peptide is terminated with the 'tag peptide' encoded by the tmRNA and targeted for degradation. The ribosome is freed to recommence translation, which seems to be the essential function of trans-translation. In Cytophaga hutchinsonii (strain ATCC 33406 / DSM 1761 / CIP 103989 / NBRC 15051 / NCIMB 9469 / D465), this protein is SsrA-binding protein.